The sequence spans 252 residues: NADP-dependent (R)-specific alcohol dehydrogenase (252 aa).

NADP(+) is bound by residues 16-19 (TLGI), 39-40 (RH), 63-64 (DA), N90, Y156, K160, and 191-195 (IKTPL). Y156 serves as the catalytic Proton donor/acceptor. Q252 provides a ligand contact to Mg(2+).

Belongs to the short-chain dehydrogenases/reductases (SDR) family. Homotetramer. Mg(2+) serves as cofactor.

The enzyme catalyses a secondary alcohol + NADP(+) = a ketone + NADPH + H(+). It carries out the reaction acetophenone + NADPH + H(+) = (R)-1-phenylethanol + NADP(+). The catalysed reaction is 2,5-hexanedione + 2 NADPH + 2 H(+) = (2R,5R)-hexanediol + 2 NADP(+). It catalyses the reaction ethyl 3-oxobutanoate + NADPH + H(+) = ethyl (R)-3-hydroxybutanoate + NADP(+). The enzyme catalyses 2-octanone + NADPH + H(+) = (2R)-octan-2-ol + NADP(+). Its function is as follows. NADP-dependent (R)-specific alcohol dehydrogenase (ADH) with a broad substrate specificity, able to catalyze in vitro the stereoselective reduction of several aliphatic and aromatic ketones as well as beta-keto esters to the corresponding enantiomerically pure alcohols. The protein is NADP-dependent (R)-specific alcohol dehydrogenase of Lentilactobacillus kefiri (Lactobacillus kefiri).